The following is a 694-amino-acid chain: Elongation factor G (694 aa).

The region spanning 8-284 (EKLRNIGIVA…AVIDFLPSPV (277 aa)) is the tr-type G domain. Residues 17–24 (AHIDAGKT), 81–85 (DTPGH), and 135–138 (NKMD) contribute to the GTP site.

Belongs to the TRAFAC class translation factor GTPase superfamily. Classic translation factor GTPase family. EF-G/EF-2 subfamily.

The protein localises to the cytoplasm. Functionally, catalyzes the GTP-dependent ribosomal translocation step during translation elongation. During this step, the ribosome changes from the pre-translocational (PRE) to the post-translocational (POST) state as the newly formed A-site-bound peptidyl-tRNA and P-site-bound deacylated tRNA move to the P and E sites, respectively. Catalyzes the coordinated movement of the two tRNA molecules, the mRNA and conformational changes in the ribosome. This is Elongation factor G from Persephonella marina (strain DSM 14350 / EX-H1).